A 371-amino-acid chain; its full sequence is Histidinol-phosphate aminotransferase (371 aa).

Lys222 carries the post-translational modification N6-(pyridoxal phosphate)lysine.

The protein belongs to the class-II pyridoxal-phosphate-dependent aminotransferase family. Histidinol-phosphate aminotransferase subfamily. Homodimer. Pyridoxal 5'-phosphate serves as cofactor.

The catalysed reaction is L-histidinol phosphate + 2-oxoglutarate = 3-(imidazol-4-yl)-2-oxopropyl phosphate + L-glutamate. It participates in amino-acid biosynthesis; L-histidine biosynthesis; L-histidine from 5-phospho-alpha-D-ribose 1-diphosphate: step 7/9. The chain is Histidinol-phosphate aminotransferase from Anoxybacillus flavithermus (strain DSM 21510 / WK1).